Consider the following 228-residue polypeptide: MLYGFSGVILQGALVTLELAISSVVLAVIIGLIGAGGKLSQNRLSGLIFEGYTTLIRGVPDLVLMLLIFYGLQIALNTVTEAMGVGQIDIDPMVAGIITLGFIYGAYFTETFRGAFMAVPKGHIEAATAFGFTRGQVFRRIMFPSMMRYALPGIGNNWQVILKSTALVSLLGLEDVVKATQLAGKSTWEPFYFAIVCGVIYLVFTTVSNGVLLFLERRYSVGVKRADL.

The Periplasmic portion of the chain corresponds to 1 to 12; sequence MLYGFSGVILQG. A helical transmembrane segment spans residues 13 to 33; that stretch reads ALVTLELAISSVVLAVIIGLI. Positions 13 to 212 constitute an ABC transmembrane type-1 domain; that stretch reads ALVTLELAIS…VFTTVSNGVL (200 aa). Topologically, residues 34-58 are cytoplasmic; sequence GAGGKLSQNRLSGLIFEGYTTLIRG. Residues 59 to 79 form a helical membrane-spanning segment; the sequence is VPDLVLMLLIFYGLQIALNTV. At 80 to 87 the chain is on the periplasmic side; that stretch reads TEAMGVGQ. Residues 88 to 108 traverse the membrane as a helical segment; that stretch reads IDIDPMVAGIITLGFIYGAYF. At 109-148 the chain is on the cytoplasmic side; it reads TETFRGAFMAVPKGHIEAATAFGFTRGQVFRRIMFPSMMR. A helical transmembrane segment spans residues 149–171; it reads YALPGIGNNWQVILKSTALVSLL. Residues 172 to 194 are Periplasmic-facing; that stretch reads GLEDVVKATQLAGKSTWEPFYFA. A helical transmembrane segment spans residues 195–215; sequence IVCGVIYLVFTTVSNGVLLFL. Topologically, residues 216-228 are cytoplasmic; the sequence is ERRYSVGVKRADL.

The protein belongs to the binding-protein-dependent transport system permease family. HisMQ subfamily. The HisPMQJ complex is composed of two ATP-binding proteins (HisP), two transmembrane proteins (HisM and HisQ) and a solute-binding protein (HisJ). The HisPMQ-ArgT complex is composed of two ATP-binding proteins (HisP), two transmembrane proteins (HisM and HisQ) and a solute-binding protein (ArgT).

Its subcellular location is the cell inner membrane. Functionally, part of the ABC transporter complex HisPMQJ involved in histidine transport. Is also part of the ABC transporter complex HisPMQ-ArgT involved in lysine/arginine/ornithine transport. Probably responsible for the translocation of the substrate across the membrane. This is Histidine/lysine/arginine/ornithine transport system permease protein HisQ (hisQ) from Escherichia coli (strain K12).